Here is a 2212-residue protein sequence, read N- to C-terminus: Nonribosomal peptide synthetase ftmPS (2212 aa).

The segment at 74-473 (TYAELDSLSD…IEHHLQQTLP (400 aa)) is adenylation 1. The 78-residue stretch at 592 to 669 (PPSTLKETTI…EQSQRAGLIQ (78 aa)) folds into the Carrier 1 domain. Residue S629 is modified to O-(pantetheine 4'-phosphoryl)serine. The interval 708–973 (EDIYPCTALQ…IATVPLRIRV (266 aa)) is condensation 1. Residues 1167 to 1564 (TYRELWAHSS…LSAVEASLMR (398 aa)) are adenylation 2. The Carrier 2 domain occupies 1678–1757 (PMSDDNERRL…QFRHLITEDD (80 aa)). The residue at position 1715 (S1715) is an O-(pantetheine 4'-phosphoryl)serine. A condensation 2 region spans residues 1815 to 2070 (HFQFDLSGAI…CTNYIPYRLS (256 aa)).

Belongs to the NRP synthetase family.

The enzyme catalyses L-proline + L-tryptophan + 2 ATP = brevianamide F + 2 AMP + 2 diphosphate + 2 H(+). Its pathway is mycotoxin biosynthesis. Functionally, nonribosomal peptide synthetase; part of the gene cluster that mediates the biosynthesis of fumitremorgins, indole alkaloids that carry not only intriguing chemical structures, but also interesting biological and pharmacological activities. The biosynthesis of fumitremorgin-type alkaloids begins by condensation of the two amino acids L-tryptophan and L-proline to brevianamide F, catalyzed by the non-ribosomal peptide synthetase ftmPS/ftmA. Brevianamide F is then prenylated by the prenyltransferase ftmPT1/ftmB in the presence of dimethylallyl diphosphate, resulting in the formation of tryprostatin B. The three cytochrome P450 monooxygenases, ftmP450-1/ftmC, ftmP450-2/ftmE and ftmP450-3/FtmG, are responsible for the conversion of tryprostatin B to 6-hydroxytryprostatin B, tryprostatin A to fumitremorgin C and fumitremorgin C to 12,13-dihydroxyfumitremorgin C, respectively. The putative methyltransferase ftmMT/ftmD is expected for the conversion of 6-hydroxytryprostatin B to tryprostatin A. FtmPT2/FtmH catalyzes the prenylation of 12,13-dihydroxyfumitre-morgin C in the presence of dimethylallyl diphosphate, resulting in the formation of fumitremorgin B. Fumitremorgin B is further converted to verruculogen by ftmOx1/ftmF via the insertion of an endoperoxide bond between the two prenyl moieties. Finally, verruculogen is further converted to fumitremorgin A by the verruculogen prenyltransferase ftmPT3. This Neosartorya fischeri (strain ATCC 1020 / DSM 3700 / CBS 544.65 / FGSC A1164 / JCM 1740 / NRRL 181 / WB 181) (Aspergillus fischerianus) protein is Nonribosomal peptide synthetase ftmPS (ftmPS).